The chain runs to 338 residues: MGKKQNRKTGNSKTQSASPPPKERSSSPATEQSWMENDFDELREEGFRRSNYSELREDIQTKGKEVENFEKNLEECITRITNTEKCLKELMELKTKARELREECRSLRSRCDQLEERVSAMEDEMNEMKREGKFREKRIKRNEQSLQEIWDYVKRPNLRLIGVPESDVENGTKLENTLQDIIQENFPNLARQANVQIQEIQRTPQRYSSRRATPRHIIVRFTKVEMKEKMLRAAREKGRVTLKGKPIRLTADLSAETLQARREWGPIFNILKEKNFQPRISYPAKLSFISEGEIKYFIDKQMLRDFVTTRPALKELLKEALNMERNNRYQPLQNHAKM.

Residues 1-40 (MGKKQNRKTGNSKTQSASPPPKERSSSPATEQSWMENDFD) are disordered. Polar residues-rich tracts occupy residues 8–17 (KTGNSKTQSA) and 26–35 (SSPATEQSWM). Residues 49–153 (RSNYSELRED…QSLQEIWDYV (105 aa)) are a coiled coil. Residues 157–252 (NLRLIGVPES…KGKPIRLTAD (96 aa)) form an RNA recognition motif (RRM) domain region. The segment at 253 to 317 (LSAETLQARR…TTRPALKELL (65 aa)) is C-terminal domain (CTD).

The protein belongs to the transposase 22 family. In terms of assembly, homotrimer (via coiled coil domain). May also form larger homooligomers. May interact with DDX39A, HNRNPA1, SERBP1 and YBX1. Interacts with TEX19 and UBR2. Interacts with MOV10. Interacts with APOBEC3D; this interaction inhibits LINE-1 retrotransposition. Post-translationally, polyubiquitinated, probably by UBR2, which induces its degradation.

The protein resides in the nucleus. It is found in the nucleolus. Its subcellular location is the cytoplasm. The protein localises to the cytoplasmic ribonucleoprotein granule. It localises to the stress granule. Its function is as follows. Nucleic acid-binding protein which is essential for retrotransposition of LINE-1 elements in the genome. Functions as a nucleic acid chaperone binding its own transcript and therefore preferentially mobilizing the transcript from which they are encoded. This chain is LINE-1 retrotransposable element ORF1 protein (L1RE1), found in Homo sapiens (Human).